The following is a 227-amino-acid chain: Endo-1,4-beta-xylanase 1 (227 aa).

The first 19 residues, 1 to 19 (MVSLKSVLAAATAVSSAIA), serve as a signal peptide directing secretion. Residues 37–225 (QVTPNAEGWH…SSGESDIYVQ (189 aa)) form the GH11 domain. The active-site Nucleophile is the Glu-121. Glu-212 serves as the catalytic Proton donor.

Belongs to the glycosyl hydrolase 11 (cellulase G) family.

The enzyme catalyses Endohydrolysis of (1-&gt;4)-beta-D-xylosidic linkages in xylans.. Its pathway is glycan degradation; xylan degradation. This chain is Endo-1,4-beta-xylanase 1, found in Humicola insolens (Soft-rot fungus).